A 103-amino-acid polypeptide reads, in one-letter code: MSHTILLLQPTDNIESRSWSDYENTTECLEGICRVYEEYLKKKVPAQNEITYDISHLFEFIDDLKDLSMLVLDNTTYTYVPHNKQYVKESIYKLMNNRLNNQH.

It belongs to the E(R) family. In terms of assembly, homodimer.

May have a role in the cell cycle. In Caenorhabditis elegans, this protein is Enhancer of rudimentary homolog.